A 374-amino-acid chain; its full sequence is Alanine racemase (374 aa).

The active-site Proton acceptor; specific for D-alanine is the Lys35. Lys35 bears the N6-(pyridoxal phosphate)lysine mark. Residue Arg133 coordinates substrate. The active-site Proton acceptor; specific for L-alanine is the Tyr261. Position 315 (Met315) interacts with substrate.

Belongs to the alanine racemase family. It depends on pyridoxal 5'-phosphate as a cofactor.

The enzyme catalyses L-alanine = D-alanine. It participates in amino-acid biosynthesis; D-alanine biosynthesis; D-alanine from L-alanine: step 1/1. In terms of biological role, catalyzes the interconversion of L-alanine and D-alanine. May also act on other amino acids. The chain is Alanine racemase (alr) from Psychrobacter sp. (strain PRwf-1).